Reading from the N-terminus, the 334-residue chain is uncharacterized protein (334 aa).

Residue Tyr-52 is the Proton donor of the active site. Positions 314-334 (LPPPASPNSEPQVTGGCSSMC) are disordered. Over residues 320–334 (PNSEPQVTGGCSSMC) the composition is skewed to polar residues.

It belongs to the aldo/keto reductase family.

It is found in the cytoplasm. Its subcellular location is the nucleus. This is an uncharacterized protein from Schizosaccharomyces pombe (strain 972 / ATCC 24843) (Fission yeast).